The following is an 866-amino-acid chain: DNA replication licensing factor MCM4 (866 aa).

Disordered stretches follow at residues 1–67, 81–107, and 124–145; these read MSSP…TSPA, SPLN…TPLR, and GGGS…PVSE. Composition is skewed to polar residues over residues 47 to 63 and 81 to 93; these read DNIS…SLPA and SPLN…SMGS. 2 positions are modified to phosphoserine: Ser55 and Ser81. Thr87 bears the Phosphothreonine mark. In terms of domain architecture, MCM spans 460–669; that stretch reads IYDRLARAIA…FDKRLASHLV (210 aa). Residue 512 to 519 coordinates ATP; that stretch reads GDPGTSKS. Residues 644–647 carry the Arginine finger motif; sequence SRFD.

This sequence belongs to the MCM family. As to quaternary structure, component of the Mcm2-7 complex. The complex forms a toroidal hexameric ring with the proposed subunit order Mcm2-Mcm6-Mcm4-Mcm7-Mcm3-Mcm5. In terms of processing, phosphorylated by the catalytic component of the Dbf4-dependent kinase (DDK) complex Cdc7.

The protein localises to the nucleus. It carries out the reaction ATP + H2O = ADP + phosphate + H(+). In terms of biological role, acts as a component of the Mcm2-7 complex (Mcm complex) which is the putative replicative helicase essential for 'once per cell cycle' DNA replication initiation and elongation in eukaryotic cells. The active ATPase sites in the Mcm2-7 ring are formed through the interaction surfaces of two neighboring subunits such that a critical structure of a conserved arginine finger motif is provided in trans relative to the ATP-binding site of the Walker A box of the adjacent subunit. The six ATPase active sites, however, are likely to contribute differentially to the complex helicase activity. Required for DNA replication and cell proliferation. Essential role in mitotic DNA replication but not in endoreplication. The chain is DNA replication licensing factor MCM4 (dpa) from Drosophila melanogaster (Fruit fly).